The sequence spans 430 residues: SH3 domain-containing protein PJ696.02 (430 aa).

The segment at 237–372 (EPEDIWGPSS…KPKFKQDSLG (136 aa)) is disordered. Basic and acidic residues predominate over residues 263–277 (RRGDSYRSNRSRAHD). Serine 285 carries the phosphoserine modification. The span at 304–313 (SKMDNRRSKY) shows a compositional bias: basic and acidic residues. A Phosphothreonine modification is found at threonine 316. Serine 318 and serine 324 each carry phosphoserine. Position 325 is a phosphotyrosine (tyrosine 325). Residues serine 326, serine 354, and serine 406 each carry the phosphoserine modification. Residues 333–358 (VYSSDVSTESSSQFSSRSSEYSKPSR) are compositionally biased toward low complexity. Residues 371–430 (LGPNQARAMYSFAGEQPGDLSFQKGDIIDIVERSGSHDDWWTGRIGYREGIFPANYVKLS) enclose the SH3 domain.

This sequence belongs to the SH3YL1 family.

This Schizosaccharomyces pombe (strain 972 / ATCC 24843) (Fission yeast) protein is SH3 domain-containing protein PJ696.02.